Reading from the N-terminus, the 270-residue chain is 4-hydroxy-tetrahydrodipicolinate reductase (270 aa).

NAD(+) contacts are provided by residues 9 to 14 (GAGGRM) and glutamate 35. Arginine 36 serves as a coordination point for NADP(+). Residues 99–101 (GTT) and 123–126 (ASNF) contribute to the NAD(+) site. Histidine 156 functions as the Proton donor/acceptor in the catalytic mechanism. Residue histidine 157 participates in (S)-2,3,4,5-tetrahydrodipicolinate binding. Lysine 160 acts as the Proton donor in catalysis. Residue 166-167 (GT) participates in (S)-2,3,4,5-tetrahydrodipicolinate binding.

The protein belongs to the DapB family.

It is found in the cytoplasm. The enzyme catalyses (S)-2,3,4,5-tetrahydrodipicolinate + NAD(+) + H2O = (2S,4S)-4-hydroxy-2,3,4,5-tetrahydrodipicolinate + NADH + H(+). The catalysed reaction is (S)-2,3,4,5-tetrahydrodipicolinate + NADP(+) + H2O = (2S,4S)-4-hydroxy-2,3,4,5-tetrahydrodipicolinate + NADPH + H(+). It functions in the pathway amino-acid biosynthesis; L-lysine biosynthesis via DAP pathway; (S)-tetrahydrodipicolinate from L-aspartate: step 4/4. Catalyzes the conversion of 4-hydroxy-tetrahydrodipicolinate (HTPA) to tetrahydrodipicolinate. The protein is 4-hydroxy-tetrahydrodipicolinate reductase of Haemophilus influenzae (strain 86-028NP).